A 506-amino-acid polypeptide reads, in one-letter code: Lysine--tRNA ligase (506 aa).

Mg(2+) is bound by residues Glu416 and Glu423.

The protein belongs to the class-II aminoacyl-tRNA synthetase family. Homodimer. The cofactor is Mg(2+).

It localises to the cytoplasm. The enzyme catalyses tRNA(Lys) + L-lysine + ATP = L-lysyl-tRNA(Lys) + AMP + diphosphate. This is Lysine--tRNA ligase from Baumannia cicadellinicola subsp. Homalodisca coagulata.